We begin with the raw amino-acid sequence, 529 residues long: Bifunctional purine biosynthesis protein PurH (529 aa).

In terms of domain architecture, MGS-like spans 1 to 148 (MQQRRPVRRA…KNHKDVAIVV (148 aa)). Lysine 287 is modified (N6-acetyllysine).

The protein belongs to the PurH family.

It carries out the reaction (6R)-10-formyltetrahydrofolate + 5-amino-1-(5-phospho-beta-D-ribosyl)imidazole-4-carboxamide = 5-formamido-1-(5-phospho-D-ribosyl)imidazole-4-carboxamide + (6S)-5,6,7,8-tetrahydrofolate. The enzyme catalyses IMP + H2O = 5-formamido-1-(5-phospho-D-ribosyl)imidazole-4-carboxamide. Its pathway is purine metabolism; IMP biosynthesis via de novo pathway; 5-formamido-1-(5-phospho-D-ribosyl)imidazole-4-carboxamide from 5-amino-1-(5-phospho-D-ribosyl)imidazole-4-carboxamide (10-formyl THF route): step 1/1. It participates in purine metabolism; IMP biosynthesis via de novo pathway; IMP from 5-formamido-1-(5-phospho-D-ribosyl)imidazole-4-carboxamide: step 1/1. The chain is Bifunctional purine biosynthesis protein PurH from Escherichia coli O17:K52:H18 (strain UMN026 / ExPEC).